A 26-amino-acid polypeptide reads, in one-letter code: Probable early E4 17 kDa protein (26 aa).

In Homo sapiens (Human), this protein is Probable early E4 17 kDa protein.